Here is a 437-residue protein sequence, read N- to C-terminus: Histidine--tRNA ligase (437 aa).

It belongs to the class-II aminoacyl-tRNA synthetase family. Homodimer.

It localises to the cytoplasm. It carries out the reaction tRNA(His) + L-histidine + ATP = L-histidyl-tRNA(His) + AMP + diphosphate + H(+). The polypeptide is Histidine--tRNA ligase (Opitutus terrae (strain DSM 11246 / JCM 15787 / PB90-1)).